Reading from the N-terminus, the 341-residue chain is Basic membrane protein D (341 aa).

The N-terminal stretch at 1–16 (MLKKVYYFLIFLFIVA) is a signal peptide. Residue Cys-17 is the site of N-palmitoyl cysteine attachment. A lipid anchor (S-diacylglycerol cysteine) is attached at Cys-17.

This sequence belongs to the BMP lipoprotein family. Monomer.

Its subcellular location is the cell inner membrane. In terms of biological role, binds adenosine and inosine. May be part of an ABC-type nucleoside uptake system involved in the purine salvage pathway. This is Basic membrane protein D from Borreliella burgdorferi (strain JD1) (Borrelia burgdorferi).